We begin with the raw amino-acid sequence, 287 residues long: N-acetylmannosamine kinase (287 aa).

ATP-binding positions include 5-12 (AIDIGGTK) and 131-138 (GVGGGIII). Zn(2+)-binding residues include H155, C165, C167, and C172.

Belongs to the ROK (NagC/XylR) family. NanK subfamily. In terms of assembly, homodimer.

It carries out the reaction an N-acyl-D-mannosamine + ATP = an N-acyl-D-mannosamine 6-phosphate + ADP + H(+). Its pathway is amino-sugar metabolism; N-acetylneuraminate degradation; D-fructose 6-phosphate from N-acetylneuraminate: step 2/5. Its function is as follows. Catalyzes the phosphorylation of N-acetylmannosamine (ManNAc) to ManNAc-6-P. This chain is N-acetylmannosamine kinase, found in Vibrio cholerae serotype O1 (strain ATCC 39541 / Classical Ogawa 395 / O395).